A 229-amino-acid chain; its full sequence is Ribose-5-phosphate isomerase A (229 aa).

Residues 28 to 31 (TGST), 85 to 88 (DGAD), and 98 to 101 (KGRG) contribute to the substrate site. The active-site Proton acceptor is the glutamate 107. Lysine 125 is a binding site for substrate.

It belongs to the ribose 5-phosphate isomerase family. Homotetramer.

It catalyses the reaction aldehydo-D-ribose 5-phosphate = D-ribulose 5-phosphate. It functions in the pathway carbohydrate degradation; pentose phosphate pathway; D-ribose 5-phosphate from D-ribulose 5-phosphate (non-oxidative stage): step 1/1. With respect to regulation, inhibited by D-4-phosphoerythronic acid. Involved in the first step of the non-oxidative branch of the pentose phosphate pathway. It catalyzes the reversible conversion of ribose-5-phosphate to ribulose 5-phosphate. In Pyrococcus horikoshii (strain ATCC 700860 / DSM 12428 / JCM 9974 / NBRC 100139 / OT-3), this protein is Ribose-5-phosphate isomerase A.